A 479-amino-acid chain; its full sequence is Probable cytosol aminopeptidase (479 aa).

Positions 247 and 252 each coordinate Mn(2+). K259 is an active-site residue. 3 residues coordinate Mn(2+): D270, D329, and E331. The active site involves R333.

Belongs to the peptidase M17 family. Mn(2+) serves as cofactor.

It localises to the cytoplasm. It catalyses the reaction Release of an N-terminal amino acid, Xaa-|-Yaa-, in which Xaa is preferably Leu, but may be other amino acids including Pro although not Arg or Lys, and Yaa may be Pro. Amino acid amides and methyl esters are also readily hydrolyzed, but rates on arylamides are exceedingly low.. The enzyme catalyses Release of an N-terminal amino acid, preferentially leucine, but not glutamic or aspartic acids.. Presumably involved in the processing and regular turnover of intracellular proteins. Catalyzes the removal of unsubstituted N-terminal amino acids from various peptides. The chain is Probable cytosol aminopeptidase from Vesicomyosocius okutanii subsp. Calyptogena okutanii (strain HA).